We begin with the raw amino-acid sequence, 496 residues long: Glycerol kinase (496 aa).

ADP is bound at residue threonine 12. Positions 12, 13, and 14 each coordinate ATP. Threonine 12 serves as a coordination point for sn-glycerol 3-phosphate. Position 16 (arginine 16) interacts with ADP. Residues arginine 82, glutamate 83, tyrosine 134, and aspartate 244 each coordinate sn-glycerol 3-phosphate. The glycerol site is built by arginine 82, glutamate 83, tyrosine 134, aspartate 244, and glutamine 245. Residues threonine 266 and glycine 309 each coordinate ADP. The ATP site is built by threonine 266, glycine 309, glutamine 313, and glycine 410. ADP is bound by residues glycine 410 and asparagine 414.

The protein belongs to the FGGY kinase family.

The catalysed reaction is glycerol + ATP = sn-glycerol 3-phosphate + ADP + H(+). The protein operates within polyol metabolism; glycerol degradation via glycerol kinase pathway; sn-glycerol 3-phosphate from glycerol: step 1/1. Inhibited by fructose 1,6-bisphosphate (FBP). Its function is as follows. Key enzyme in the regulation of glycerol uptake and metabolism. Catalyzes the phosphorylation of glycerol to yield sn-glycerol 3-phosphate. This chain is Glycerol kinase, found in Treponema denticola (strain ATCC 35405 / DSM 14222 / CIP 103919 / JCM 8153 / KCTC 15104).